A 264-amino-acid polypeptide reads, in one-letter code: ATP synthase subunit a (264 aa).

Transmembrane regions (helical) follow at residues leucine 39–isoleucine 59, valine 97–valine 117, threonine 139–tyrosine 159, leucine 205–tryptophan 225, and leucine 239–leucine 259.

Belongs to the ATPase A chain family. F-type ATPases have 2 components, CF(1) - the catalytic core - and CF(0) - the membrane proton channel. CF(1) has five subunits: alpha(3), beta(3), gamma(1), delta(1), epsilon(1). CF(0) has three main subunits: a(1), b(2) and c(9-12). The alpha and beta chains form an alternating ring which encloses part of the gamma chain. CF(1) is attached to CF(0) by a central stalk formed by the gamma and epsilon chains, while a peripheral stalk is formed by the delta and b chains.

The protein localises to the cell inner membrane. In terms of biological role, key component of the proton channel; it plays a direct role in the translocation of protons across the membrane. The chain is ATP synthase subunit a from Coxiella burnetii (strain CbuG_Q212) (Coxiella burnetii (strain Q212)).